The chain runs to 298 residues: 4-hydroxy-3-methylbut-2-enyl diphosphate reductase (298 aa).

C12 contacts [4Fe-4S] cluster. (2E)-4-hydroxy-3-methylbut-2-enyl diphosphate contacts are provided by H40 and H78. Dimethylallyl diphosphate-binding residues include H40 and H78. Isopentenyl diphosphate is bound by residues H40 and H78. C100 provides a ligand contact to [4Fe-4S] cluster. A (2E)-4-hydroxy-3-methylbut-2-enyl diphosphate-binding site is contributed by H128. Position 128 (H128) interacts with dimethylallyl diphosphate. H128 lines the isopentenyl diphosphate pocket. E130 functions as the Proton donor in the catalytic mechanism. A (2E)-4-hydroxy-3-methylbut-2-enyl diphosphate-binding site is contributed by T171. Position 200 (C200) interacts with [4Fe-4S] cluster. Residues S228, S229, N230, and S270 each coordinate (2E)-4-hydroxy-3-methylbut-2-enyl diphosphate. Dimethylallyl diphosphate contacts are provided by S228, S229, N230, and S270. S228, S229, N230, and S270 together coordinate isopentenyl diphosphate.

Belongs to the IspH family. Requires [4Fe-4S] cluster as cofactor.

The catalysed reaction is isopentenyl diphosphate + 2 oxidized [2Fe-2S]-[ferredoxin] + H2O = (2E)-4-hydroxy-3-methylbut-2-enyl diphosphate + 2 reduced [2Fe-2S]-[ferredoxin] + 2 H(+). The enzyme catalyses dimethylallyl diphosphate + 2 oxidized [2Fe-2S]-[ferredoxin] + H2O = (2E)-4-hydroxy-3-methylbut-2-enyl diphosphate + 2 reduced [2Fe-2S]-[ferredoxin] + 2 H(+). The protein operates within isoprenoid biosynthesis; dimethylallyl diphosphate biosynthesis; dimethylallyl diphosphate from (2E)-4-hydroxy-3-methylbutenyl diphosphate: step 1/1. Its pathway is isoprenoid biosynthesis; isopentenyl diphosphate biosynthesis via DXP pathway; isopentenyl diphosphate from 1-deoxy-D-xylulose 5-phosphate: step 6/6. Catalyzes the conversion of 1-hydroxy-2-methyl-2-(E)-butenyl 4-diphosphate (HMBPP) into a mixture of isopentenyl diphosphate (IPP) and dimethylallyl diphosphate (DMAPP). Acts in the terminal step of the DOXP/MEP pathway for isoprenoid precursor biosynthesis. The protein is 4-hydroxy-3-methylbut-2-enyl diphosphate reductase of Kosmotoga olearia (strain ATCC BAA-1733 / DSM 21960 / TBF 19.5.1).